The chain runs to 335 residues: MDPEVFAQARLRMDQLTKPPRALGYLEEVALRLAALQGRVKPELGRGAVVVAAADHGVVAEGVSAYPQEVTRQMVLNFLRGGAAINQFALAADCAVYVLDVGVVGELPDHPGLLKRKVRPGTANLAQGPAMTPEEAERALLAGREAARRAIAEGATLLAAGDMGIGNTTAAAALTAALLGLPPEAVVGRGTGVGEEGLRRKRQAVARALARLHPGMGPLEVAAEVGGLELVAIAGIYLEGYEAGLPLVLDGFPVTAGALLAWKMAPGLRDHLFAGHLSREPGHRHQLEALGLRPLLDLDLALGEGTGAVLAMPLLRAAARILHMATFQEAGVSRG.

Residue Glu-304 is the Proton acceptor of the active site.

The protein belongs to the CobT family.

It catalyses the reaction 5,6-dimethylbenzimidazole + nicotinate beta-D-ribonucleotide = alpha-ribazole 5'-phosphate + nicotinate + H(+). Its pathway is nucleoside biosynthesis; alpha-ribazole biosynthesis; alpha-ribazole from 5,6-dimethylbenzimidazole: step 1/2. Its function is as follows. Catalyzes the synthesis of alpha-ribazole-5'-phosphate from nicotinate mononucleotide (NAMN) and 5,6-dimethylbenzimidazole (DMB). The chain is Nicotinate-nucleotide--dimethylbenzimidazole phosphoribosyltransferase from Thermus thermophilus (strain ATCC 27634 / DSM 579 / HB8).